A 451-amino-acid polypeptide reads, in one-letter code: Chromosomal replication initiator protein DnaA (451 aa).

The tract at residues 1-71 (MSEQEIWKKV…QTIMKDVIGY (71 aa)) is domain I, interacts with DnaA modulators. Residues 71 to 112 (YEVEPKFFTAEQLAELDETSRKSNTPSEPQRQIIEYGHEGTD) form a domain II region. Residues 113 to 329 (QFNTHNTFDT…GALTRLLAYS (217 aa)) are domain III, AAA+ region. Residues Gly-157, Gly-159, Lys-160, and Thr-161 each contribute to the ATP site. A domain IV, binds dsDNA region spans residues 330–451 (KLQGRPITTE…EDLEKEIRNQ (122 aa)).

The protein belongs to the DnaA family. In terms of assembly, oligomerizes as a right-handed, spiral filament on DNA at oriC.

It is found in the cytoplasm. Functionally, plays an essential role in the initiation and regulation of chromosomal replication. ATP-DnaA binds to the origin of replication (oriC) to initiate formation of the DNA replication initiation complex once per cell cycle. Binds the DnaA box (a 9 base pair repeat at the origin) and separates the double-stranded (ds)DNA. Forms a right-handed helical filament on oriC DNA; dsDNA binds to the exterior of the filament while single-stranded (ss)DNA is stabiized in the filament's interior. The ATP-DnaA-oriC complex binds and stabilizes one strand of the AT-rich DNA unwinding element (DUE), permitting loading of DNA polymerase. After initiation quickly degrades to an ADP-DnaA complex that is not apt for DNA replication. Binds acidic phospholipids. The chain is Chromosomal replication initiator protein DnaA from Staphylococcus haemolyticus (strain JCSC1435).